The primary structure comprises 688 residues: uncharacterized protein (688 aa).

This is an uncharacterized protein from Saccharomyces cerevisiae (strain ATCC 204508 / S288c) (Baker's yeast).